The following is a 73-amino-acid chain: MNNYMINPSIVDLLTKVDNRYSLVTVTSRRARQIIDGDEALVNVEDAYKPLTTAIHEVNAGKVSYESLVEGIK.

It belongs to the RNA polymerase subunit omega family. As to quaternary structure, the RNAP catalytic core consists of 2 alpha, 1 beta, 1 beta' and 1 omega subunit. When a sigma factor is associated with the core the holoenzyme is formed, which can initiate transcription.

The catalysed reaction is RNA(n) + a ribonucleoside 5'-triphosphate = RNA(n+1) + diphosphate. Its function is as follows. Promotes RNA polymerase assembly. Latches the N- and C-terminal regions of the beta' subunit thereby facilitating its interaction with the beta and alpha subunits. In Clostridium novyi (strain NT), this protein is DNA-directed RNA polymerase subunit omega.